Here is a 104-residue protein sequence, read N- to C-terminus: 11 kDa late embryogenesis abundant protein (104 aa).

A compositionally biased stretch (low complexity) spans 1-24; sequence MQSGKNAAASAKETAANVAASAKA. The interval 1–104 is disordered; it reads MQSGKNAAAS…TGHRTGTGGI (104 aa). Positions 25-74 are enriched in basic and acidic residues; the sequence is GMEKTKASLQEKGEKMTAHDPMQKEMAREKKEERKHEAEYEKQAAKEHNA. Polar residues predominate over residues 75–89; that stretch reads AQKQTTGIGTGTHSY.

Belongs to the LEA type 1 family. In terms of tissue distribution, maximally expressed in dry seeds. Also present in mid-maturation embryos.

Functionally, LEA proteins are late embryonic proteins abundant in higher plant seed embryos. They may play an essential role in seed survival and in controlling water exchanges during seed desiccation and imbibition. The protein is 11 kDa late embryogenesis abundant protein of Helianthus annuus (Common sunflower).